Reading from the N-terminus, the 602-residue chain is Elongation factor 4 (602 aa).

The region spanning 6 to 188 (DHIRNFSIVA…AIVNKLPAPK (183 aa)) is the tr-type G domain. Residues 18–23 (DHGKST) and 135–138 (NKID) each bind GTP.

Belongs to the TRAFAC class translation factor GTPase superfamily. Classic translation factor GTPase family. LepA subfamily.

It localises to the cell inner membrane. The catalysed reaction is GTP + H2O = GDP + phosphate + H(+). In terms of biological role, required for accurate and efficient protein synthesis under certain stress conditions. May act as a fidelity factor of the translation reaction, by catalyzing a one-codon backward translocation of tRNAs on improperly translocated ribosomes. Back-translocation proceeds from a post-translocation (POST) complex to a pre-translocation (PRE) complex, thus giving elongation factor G a second chance to translocate the tRNAs correctly. Binds to ribosomes in a GTP-dependent manner. This chain is Elongation factor 4, found in Brucella abortus (strain 2308).